Reading from the N-terminus, the 1673-residue chain is Protein TIC 214 (1673 aa).

A run of 6 helical transmembrane segments spans residues 18–38, 67–87, 90–110, 127–147, 175–195, and 218–238; these read IINS…FSIG, FITG…HLAL, PHTI…CNTH, LSIQ…HFIL, VGWI…VVWI, and SMSI…YYLG.

This sequence belongs to the TIC214 family. In terms of assembly, part of the Tic complex.

Its subcellular location is the plastid. It is found in the chloroplast inner membrane. In terms of biological role, involved in protein precursor import into chloroplasts. May be part of an intermediate translocation complex acting as a protein-conducting channel at the inner envelope. The sequence is that of Protein TIC 214 from Lactuca sativa (Garden lettuce).